The sequence spans 1013 residues: Sodium/potassium-transporting ATPase subunit alpha-3 (1013 aa).

Positions 1–24 are disordered; that stretch reads MGDKKDDKDSPKKNKGKERRDLDD. Residues 1-77 are Cytoplasmic-facing; it reads MGDKKDDKDS…NALTPPPTTP (77 aa). A phosphoserine mark is found at Ser37 and Ser56. Residues 72–74 form an interaction with phosphoinositide-3 kinase region; the sequence is PPP. A helical membrane pass occupies residues 78–98; the sequence is EWVKFCRQLFGGFSILLWIGA. Topologically, residues 99 to 121 are extracellular; the sequence is ILCFLAYGIQAGTEDDPSGDNLY. Residues 122-142 form a helical membrane-spanning segment; sequence LGIVLAAVVIITGCFSYYQEA. Residues 143 to 278 lie on the Cytoplasmic side of the membrane; the sequence is KSSKIMESFK…VGKTPIAIEI (136 aa). 2 positions are modified to phosphoserine: Ser218 and Ser265. The chain crosses the membrane as a helical span at residues 279–298; the sequence is EHFIQLITGVAVFLGVSFFI. Over 299-310 the chain is Extracellular; that stretch reads LSLILGYTWLEA. Residues 311–328 traverse the membrane as a helical segment; it reads VIFLIGIIVANVPEGLLA. At 329–762 the chain is on the cytoplasmic side; the sequence is TVTVCLTLTA…EEGRLIFDNL (434 aa). The 4-aspartylphosphate intermediate role is filled by Asp366. Ser442 is subject to Phosphoserine. Tyr548 bears the Phosphotyrosine mark. Mg(2+)-binding residues include Asp707 and Asp711. The chain crosses the membrane as a helical span at residues 763–782; it reads KKSIAYTLTSNIPEITPFLL. At 783–792 the chain is on the extracellular side; sequence FIMANIPLPL. A helical membrane pass occupies residues 793–813; it reads GTITILCIDLGTDMVPAISLA. At 814–833 the chain is on the cytoplasmic side; that stretch reads YEAAESDIMKRQPRNPRTDK. Residues 834 to 856 form a helical membrane-spanning segment; it reads LVNERLISMAYGQIGMIQALGGF. Residues 857–908 are Extracellular-facing; it reads FSYFVILAENGFLPGNLVGIRLNWDDRTVNDLEDSYGQQWTYEQRKVVEFTC. A helical transmembrane segment spans residues 909–928; the sequence is HTAFFVSIVVVQWADLIICK. The Cytoplasmic portion of the chain corresponds to 929-941; sequence TRRNSVFQQGMKN. Ser933 bears the Phosphoserine; by PKA mark. Residues 942-960 form a helical membrane-spanning segment; sequence KILIFGLFEETALAAFLSY. The Extracellular portion of the chain corresponds to 961-975; the sequence is CPGMDVALRMYPLKP. Residues 976–996 traverse the membrane as a helical segment; the sequence is SWWFCAFPYSFLIFVYDEIRK. The Cytoplasmic segment spans residues 997–1013; that stretch reads LILRRNPGGWVEKETYY.

It belongs to the cation transport ATPase (P-type) (TC 3.A.3) family. Type IIC subfamily. As to quaternary structure, the sodium/potassium-transporting ATPase is composed of a catalytic alpha subunit, an auxiliary non-catalytic beta subunit and an additional regulatory subunit. Interacts with regulatory subunit FXYD1.

The protein resides in the cell membrane. It carries out the reaction K(+)(out) + Na(+)(in) + ATP + H2O = K(+)(in) + Na(+)(out) + ADP + phosphate + H(+). In terms of biological role, this is the catalytic component of the active enzyme, which catalyzes the hydrolysis of ATP coupled with the exchange of sodium and potassium ions across the plasma membrane. This action creates the electrochemical gradient of sodium and potassium ions, providing the energy for active transport of various nutrients. The chain is Sodium/potassium-transporting ATPase subunit alpha-3 (ATP1A3) from Homo sapiens (Human).